The chain runs to 84 residues: Small ribosomal subunit protein uS17 (84 aa).

The protein belongs to the universal ribosomal protein uS17 family. In terms of assembly, part of the 30S ribosomal subunit.

In terms of biological role, one of the primary rRNA binding proteins, it binds specifically to the 5'-end of 16S ribosomal RNA. The sequence is that of Small ribosomal subunit protein uS17 from Karelsulcia muelleri (strain GWSS) (Sulcia muelleri).